The primary structure comprises 317 residues: MSADVPVTVAAVRAVARDVLALELRHANGQPLPGASAGAHIDLALPNGLVRQYSLVNATGQATMDCYQVAVGWDANSRGGSVWIHEKLKVGQALRVTHRATCSEMAPEHRRVLLLAGGIGVTPIYAMAQACAQQGVDVELWASARSAPRLAYLEELKALLGQRLHLHADDEQGGPMNLTERLATQRWDAVYACGPAPMLDALTAATAHWAPGSVRMERFKGAEQPASERQPFELVLQRAGLSTTVDAHESVLDAMERVGVDFPWSCREGICGTCEAPVLEGEVQHLDYVLSPEERAEQRRMMVCVSRCGGGRLVLDI.

The FAD-binding FR-type domain maps to 2 to 108 (SADVPVTVAA…RATCSEMAPE (107 aa)). An NAD(+)-binding site is contributed by 110–220 (RRVLLLAGGI…PGSVRMERFK (111 aa)). The 2Fe-2S ferredoxin-type domain occupies 230-317 (QPFELVLQRA…CGGGRLVLDI (88 aa)). [2Fe-2S] cluster is bound by residues Cys266, Cys271, Cys274, and Cys304.

As to quaternary structure, monomer. Part of the p-toluenesulfonate methyl-monooxygenase complex TsaBM, comprising the reductase TsaB and the oxygenase TsaM. FMN is required as a cofactor.

Functionally, iron-sulfur flavoprotein carrying electrons from NADH to the oxygenase TsaM. Involved in the toluene-4-sulfonate degradation pathway. In Comamonas testosteroni (Pseudomonas testosteroni), this protein is Toluene-4-sulfonate monooxygenase system reductase subunit TsaB1 (tsaB1).